The primary structure comprises 119 residues: Microtubule nucleation factor SSNA1 (119 aa).

Position 2 is an N-acetylthreonine (T2). An important for localization to the centrosome region spans residues T2–Q32. Positions N13 to E70 form a coiled coil.

This sequence belongs to the SSNA1 family. Self-associates to form fibrils. Also forms dimers as well as monomers. Interacts with SPAST.

The protein localises to the nucleus. Its subcellular location is the cytoplasm. It localises to the cytoskeleton. The protein resides in the microtubule organizing center. It is found in the centrosome. The protein localises to the centriole. Its subcellular location is the midbody. It localises to the flagellum basal body. The protein resides in the flagellum axoneme. It is found in the cell projection. The protein localises to the axon. Microtubule-binding protein which stabilizes dynamic microtubules by slowing growth and shrinkage at both plus and minus ends and serves as a sensor of microtubule damage, protecting microtubules from the microtubule-severing enzyme SPAST. Induces microtubule branching which is mediated by the formation of long SSNA1 fibrils which guide microtubule protofilaments to split apart from the mother microtubule and form daughter microtubules. Plays a role in axon outgrowth and branching. Required for cell division. This Mus musculus (Mouse) protein is Microtubule nucleation factor SSNA1.